The sequence spans 58 residues: Enterocin-HF (58 aa).

Residues 1–15 (MEKLTVKEMSQVVGG) constitute a propeptide that is removed on maturation. C24 and C29 form a disulfide bridge.

Its subcellular location is the secreted. Functionally, bacteriocin. This Enterococcus faecium (Streptococcus faecium) protein is Enterocin-HF (entHF).